A 302-amino-acid polypeptide reads, in one-letter code: MYSEFRSIDGIILIDKPYGLSSHETLQKVKGILKIKKMGHTGTLDPLATGMLPMCCGRATKFSQFLMNFKKRYRVIAKLGQKTSTSDSEGQIIHVRPITFTNLQLQKVLKSFHGKIKQIPSMYSAIKYHGHALYKYARQGIVISRKVRDAIIYELKVLGYSYKHKYLELDIICSKGTYIRTLIEDVGEKLNCGAHVISLRRLQVGNYTSFQMIDIKTLNKLVKYNINVLEHILLSVDNAISCFPEVNIVPNVIKNLQNGQKVKTHSGFINQFVRITEGINRRFIGIGKINNINELYSYRLII.

Histidine 40 lines the substrate pocket. The active-site Nucleophile is the aspartate 45. Substrate is bound by residues tyrosine 73, tyrosine 178, and leucine 199.

The protein belongs to the pseudouridine synthase TruB family. Type 1 subfamily.

The enzyme catalyses uridine(55) in tRNA = pseudouridine(55) in tRNA. In terms of biological role, responsible for synthesis of pseudouridine from uracil-55 in the psi GC loop of transfer RNAs. The chain is tRNA pseudouridine synthase B from Buchnera aphidicola subsp. Baizongia pistaciae (strain Bp).